The primary structure comprises 348 residues: D-alanine--D-alanine ligase (348 aa).

Residues Lys132–Arg334 enclose the ATP-grasp domain. ATP is bound at residue Glu162–Glu217. The Mg(2+) site is built by Asp288, Glu301, and Asn303.

It belongs to the D-alanine--D-alanine ligase family. Mg(2+) serves as cofactor. Requires Mn(2+) as cofactor.

It is found in the cytoplasm. It catalyses the reaction 2 D-alanine + ATP = D-alanyl-D-alanine + ADP + phosphate + H(+). It functions in the pathway cell wall biogenesis; peptidoglycan biosynthesis. Its function is as follows. Cell wall formation. The protein is D-alanine--D-alanine ligase of Streptococcus equi subsp. equi (strain 4047).